Reading from the N-terminus, the 303-residue chain is Mitochondrial carrier homolog 2 (303 aa).

Position 2 is an N-acetylalanine (A2). Residues 2–15 (ADAASQVLLGSGLT) are Mitochondrial intermembrane-facing. Solcar repeat units lie at residues 2 to 98 (ADAA…YQES) and 118 to 206 (DRVI…INTY). The helical transmembrane segment at 16–36 (ILSQPLMYVKVLIQVGYEPLP) threads the bilayer. Residues 37 to 77 (PTIGRNIFGRQVCQLPGLFCYAQHIASIDGRRGLFTGLTPR) are Cytoplasmic-facing. A helical transmembrane segment spans residues 78 to 92 (LCSGVLGTVVHGKVL). Topologically, residues 93–135 (QYYQESEKPEELGSVTVQKEYSSSFDRVIKETTREMIARSAAT) are mitochondrial intermembrane. A helical membrane pass occupies residues 136-156 (LITHPFHVITLRSMVQFIGRE). The Cytoplasmic portion of the chain corresponds to 157–180 (SKYCGLCDSIVTIYREEGIVGFFA). Residues 181-199 (GLIPRLLGDIISLWLCNSL) traverse the membrane as a helical segment. Residues 200 to 231 (AYLINTYALDSGVSTMNEMKSYSQAVTGFFAS) lie on the Mitochondrial intermembrane side of the membrane. A helical transmembrane segment spans residues 232-252 (MLTYPFVLVSNLMAVNNCGLA). The Cytoplasmic portion of the chain corresponds to 253 to 280 (GGSPPYSPIYTSWIDCWCMLQKAGNMSR). Residues 281–303 (GNSLFFRKVPCGKTYCYDLRMLI) form a helical membrane-spanning segment.

The protein belongs to the mitochondrial carrier (TC 2.A.29) family. Interacts with p15BID. As to expression, expressed in a wide variety of tissues. Predominant expressed in liver, kidney, heart, skeletal muscle and testis.

Its subcellular location is the mitochondrion outer membrane. In terms of biological role, protein insertase that mediates insertion of transmembrane proteins into the mitochondrial outer membrane. Catalyzes insertion of proteins with alpha-helical transmembrane regions, such as signal-anchored, tail-anchored and multi-pass membrane proteins. Does not mediate insertion of beta-barrel transmembrane proteins. Also acts as a receptor for the truncated form of pro-apoptotic BH3-interacting domain death agonist (p15 BID) and has therefore a critical function in apoptosis. Regulates the quiescence/cycling of hematopoietic stem cells (HSCs). Acts as a regulator of mitochondrial fusion, essential for the naive-to-primed interconversion of embryonic stem cells (ESCs). Acts as a regulator of lipid homeostasis and has a regulatory role in adipocyte differentiation and biology. This is Mitochondrial carrier homolog 2 from Mus musculus (Mouse).